We begin with the raw amino-acid sequence, 310 residues long: MIFTGTANTRLAVDVVNHLDMSLGKMTVGRFSDGEVMVEINENVRGKDVFVLQPTCAPTNDNLMEIMVMVDALRRASAGRITAAIPYFGYARQDRRPRSARVAISAKVVANMLQVAGVDRVLTMDLHADQIQGFFDIPVDNIYAGPILLGDIWRRNFSNLVVVSPDIGGVVRARALAKQLEADLAIIDKRRPRANVSEVMNIIGEVDGRTCIIMDDMVDTAGTLCKAAQALKDRGAGAVYAYCTHPVLSGGAIERIETSSLDELVVTDTIPLSEQGQACGKIRQLSCAALLGETILRISNAESVSSLFAD.

ATP contacts are provided by residues Asp33–Glu35 and Arg92–Gln93. Positions 127 and 166 each coordinate Mg(2+). Lys189 is a catalytic residue. Residues Arg191, Asp215, and Asp219–Thr223 contribute to the D-ribose 5-phosphate site.

The protein belongs to the ribose-phosphate pyrophosphokinase family. Class I subfamily. As to quaternary structure, homohexamer. It depends on Mg(2+) as a cofactor.

It is found in the cytoplasm. The catalysed reaction is D-ribose 5-phosphate + ATP = 5-phospho-alpha-D-ribose 1-diphosphate + AMP + H(+). Its pathway is metabolic intermediate biosynthesis; 5-phospho-alpha-D-ribose 1-diphosphate biosynthesis; 5-phospho-alpha-D-ribose 1-diphosphate from D-ribose 5-phosphate (route I): step 1/1. In terms of biological role, involved in the biosynthesis of the central metabolite phospho-alpha-D-ribosyl-1-pyrophosphate (PRPP) via the transfer of pyrophosphoryl group from ATP to 1-hydroxyl of ribose-5-phosphate (Rib-5-P). This chain is Ribose-phosphate pyrophosphokinase, found in Bordetella parapertussis (strain 12822 / ATCC BAA-587 / NCTC 13253).